The following is a 313-amino-acid chain: Ribosomal RNA small subunit methyltransferase H (313 aa).

Residues 35–37 (GGH), D55, F79, D100, and Q107 each bind S-adenosyl-L-methionine.

Belongs to the methyltransferase superfamily. RsmH family.

It is found in the cytoplasm. The catalysed reaction is cytidine(1402) in 16S rRNA + S-adenosyl-L-methionine = N(4)-methylcytidine(1402) in 16S rRNA + S-adenosyl-L-homocysteine + H(+). In terms of biological role, specifically methylates the N4 position of cytidine in position 1402 (C1402) of 16S rRNA. The chain is Ribosomal RNA small subunit methyltransferase H from Burkholderia thailandensis (strain ATCC 700388 / DSM 13276 / CCUG 48851 / CIP 106301 / E264).